We begin with the raw amino-acid sequence, 334 residues long: MKVKVGINGYGTIGKRVGYAVSKQADMELVGVAKTKPDFEAYRAKELGIPVYAASPDFVPRFEKVGFEIVGTLEDLLEKVDVIVDATPGGMGEKNKALYEKAGVKAIFQGGEKASVAEVSFVAQANYEKALGKDYVRVVSCNTTGLTRTLNAIKDYIDYVYAVMIRRAADPNDIKRGPVNAIKPSVEVPSHHGPDVQTVIPINIETMAFIVPTTLMHVHSVMVELKKPLTREDVIKIFENTTRVLLFEKERGFDSTAQLIEFARDLHREWNNLYEIGVWKESISVKGNRLFYIQAVHQESDVVPENIDAIRAMFELADKWESIKKTNKSLGILK.

NAD(+) contacts are provided by residues 12-13 (TI) and Gly-111. 140 to 142 (SCN) lines the D-glyceraldehyde 3-phosphate pocket. Catalysis depends on Cys-141, which acts as the Nucleophile. Arg-167 contacts NAD(+). A D-glyceraldehyde 3-phosphate-binding site is contributed by 192 to 193 (HG). Gln-298 provides a ligand contact to NAD(+).

It belongs to the glyceraldehyde-3-phosphate dehydrogenase family. As to quaternary structure, homotetramer.

It localises to the cytoplasm. The enzyme catalyses D-glyceraldehyde 3-phosphate + phosphate + NADP(+) = (2R)-3-phospho-glyceroyl phosphate + NADPH + H(+). The catalysed reaction is D-glyceraldehyde 3-phosphate + phosphate + NAD(+) = (2R)-3-phospho-glyceroyl phosphate + NADH + H(+). Its pathway is carbohydrate degradation; glycolysis; pyruvate from D-glyceraldehyde 3-phosphate: step 1/5. The polypeptide is Glyceraldehyde-3-phosphate dehydrogenase (Thermococcus sibiricus (strain DSM 12597 / MM 739)).